We begin with the raw amino-acid sequence, 117 residues long: MDLYPPASWAALVPFCKALTFKVPVVLGNRNPSPPSPLPPMALSLSLLIPLSRLSLSGSSDTADGSLLISCISRGSCGIFRMGCEAVKGRSLGCLLPRSNCTYGCMSLRKYVSVCSM.

This is an uncharacterized protein from Saccharomyces cerevisiae (strain ATCC 204508 / S288c) (Baker's yeast).